The sequence spans 435 residues: 3-ketoacyl-CoA thiolase (435 aa).

Residue cysteine 98 is the Acyl-thioester intermediate of the active site. Residues histidine 391 and cysteine 421 each act as proton acceptor in the active site.

The protein belongs to the thiolase-like superfamily. Thiolase family. Heterotetramer of two alpha chains (FadJ) and two beta chains (FadI).

The protein resides in the cytoplasm. It carries out the reaction an acyl-CoA + acetyl-CoA = a 3-oxoacyl-CoA + CoA. It functions in the pathway lipid metabolism; fatty acid beta-oxidation. Catalyzes the final step of fatty acid oxidation in which acetyl-CoA is released and the CoA ester of a fatty acid two carbons shorter is formed. The polypeptide is 3-ketoacyl-CoA thiolase (Vibrio vulnificus (strain CMCP6)).